We begin with the raw amino-acid sequence, 347 residues long: NADH-ubiquinone oxidoreductase chain 2 (347 aa).

Transmembrane regions (helical) follow at residues 13-33 (IFAG…WVGL), 55-75 (AAIK…MAIL), 96-116 (LMIM…FWVP), 123-143 (PLMS…SIMY), 149-169 (LNVN…SWGG), 178-198 (ILAY…PYNP), 201-221 (TILN…LLNL), 247-267 (TLLS…WVII), 274-294 (NSLI…YFYL), and 326-346 (LPTL…MLMI).

The protein belongs to the complex I subunit 2 family. Core subunit of respiratory chain NADH dehydrogenase (Complex I) which is composed of 45 different subunits. Interacts with TMEM242.

It is found in the mitochondrion inner membrane. The catalysed reaction is a ubiquinone + NADH + 5 H(+)(in) = a ubiquinol + NAD(+) + 4 H(+)(out). Functionally, core subunit of the mitochondrial membrane respiratory chain NADH dehydrogenase (Complex I) which catalyzes electron transfer from NADH through the respiratory chain, using ubiquinone as an electron acceptor. Essential for the catalytic activity and assembly of complex I. The sequence is that of NADH-ubiquinone oxidoreductase chain 2 from Pan paniscus (Pygmy chimpanzee).